The chain runs to 406 residues: Multifunctional CCA protein (406 aa).

Residues Gly-8 and Arg-11 each contribute to the ATP site. CTP contacts are provided by Gly-8 and Arg-11. 2 residues coordinate Mg(2+): Asp-21 and Asp-23. ATP contacts are provided by Arg-91, Arg-137, and Arg-140. Arg-91, Arg-137, and Arg-140 together coordinate CTP. Positions 228–329 constitute an HD domain; it reads TGIHTLMVAE…IKILNKFDVW (102 aa).

It belongs to the tRNA nucleotidyltransferase/poly(A) polymerase family. Bacterial CCA-adding enzyme type 1 subfamily. In terms of assembly, monomer. Can also form homodimers and oligomers. Requires Mg(2+) as cofactor. Ni(2+) is required as a cofactor.

The enzyme catalyses a tRNA precursor + 2 CTP + ATP = a tRNA with a 3' CCA end + 3 diphosphate. It catalyses the reaction a tRNA with a 3' CCA end + 2 CTP + ATP = a tRNA with a 3' CCACCA end + 3 diphosphate. Catalyzes the addition and repair of the essential 3'-terminal CCA sequence in tRNAs without using a nucleic acid template. Adds these three nucleotides in the order of C, C, and A to the tRNA nucleotide-73, using CTP and ATP as substrates and producing inorganic pyrophosphate. tRNA 3'-terminal CCA addition is required both for tRNA processing and repair. Also involved in tRNA surveillance by mediating tandem CCA addition to generate a CCACCA at the 3' terminus of unstable tRNAs. While stable tRNAs receive only 3'-terminal CCA, unstable tRNAs are marked with CCACCA and rapidly degraded. This Vibrio parahaemolyticus serotype O3:K6 (strain RIMD 2210633) protein is Multifunctional CCA protein.